A 98-amino-acid polypeptide reads, in one-letter code: NADH-ubiquinone oxidoreductase chain 4L (98 aa).

Transmembrane regions (helical) follow at residues 1 to 21, 29 to 49, and 61 to 81; these read MSLVHMNVIVAFTLSLVGLLM, ALLCMEGMMLSLFVLAALTIL, and IILLVFAACEAAIGLALLVTI.

The protein belongs to the complex I subunit 4L family. As to quaternary structure, core subunit of respiratory chain NADH dehydrogenase (Complex I) which is composed of 45 different subunits.

The protein resides in the mitochondrion inner membrane. The catalysed reaction is a ubiquinone + NADH + 5 H(+)(in) = a ubiquinol + NAD(+) + 4 H(+)(out). Its function is as follows. Core subunit of the mitochondrial membrane respiratory chain NADH dehydrogenase (Complex I) which catalyzes electron transfer from NADH through the respiratory chain, using ubiquinone as an electron acceptor. Part of the enzyme membrane arm which is embedded in the lipid bilayer and involved in proton translocation. The protein is NADH-ubiquinone oxidoreductase chain 4L (MT-ND4L) of Ziphius cavirostris (Cuvier's beaked whale).